Here is a 229-residue protein sequence, read N- to C-terminus: ACD11 homolog protein (229 aa).

Residues E84, K88, R123, R127, and H166 each coordinate an N-acylsphingoid base 1-phosphate.

The protein belongs to the GLTP family.

The polypeptide is ACD11 homolog protein (Arabidopsis thaliana (Mouse-ear cress)).